A 247-amino-acid chain; its full sequence is Uroporphyrinogen-III C-methyltransferase (247 aa).

Residues Pro-12, Thr-117–Ala-118, Met-168, Ala-197, and Ala-225 contribute to the S-adenosyl-L-homocysteine site.

This sequence belongs to the precorrin methyltransferase family.

The catalysed reaction is uroporphyrinogen III + 2 S-adenosyl-L-methionine = precorrin-2 + 2 S-adenosyl-L-homocysteine + H(+). The protein operates within cofactor biosynthesis; adenosylcobalamin biosynthesis; precorrin-2 from uroporphyrinogen III: step 1/1. Its pathway is porphyrin-containing compound metabolism; siroheme biosynthesis; precorrin-2 from uroporphyrinogen III: step 1/1. Functionally, catalyzes the two successive C-2 and C-7 methylation reactions involved in the conversion of uroporphyrinogen III to precorrin-2 via the intermediate formation of precorrin-1. It is a step in the biosynthesis of both cobalamin (vitamin B12) and siroheme. This is Uroporphyrinogen-III C-methyltransferase from Pseudomonas fluorescens.